The following is a 265-amino-acid chain: Hydroxyethylthiazole kinase 2 (265 aa).

Methionine 39 contacts substrate. Positions 115 and 168 each coordinate ATP. Glycine 195 is a substrate binding site.

It belongs to the Thz kinase family. The cofactor is Mg(2+).

The enzyme catalyses 5-(2-hydroxyethyl)-4-methylthiazole + ATP = 4-methyl-5-(2-phosphooxyethyl)-thiazole + ADP + H(+). Its pathway is cofactor biosynthesis; thiamine diphosphate biosynthesis; 4-methyl-5-(2-phosphoethyl)-thiazole from 5-(2-hydroxyethyl)-4-methylthiazole: step 1/1. Catalyzes the phosphorylation of the hydroxyl group of 4-methyl-5-beta-hydroxyethylthiazole (THZ). In Clostridium botulinum (strain Langeland / NCTC 10281 / Type F), this protein is Hydroxyethylthiazole kinase 2.